A 464-amino-acid chain; its full sequence is Potassium/proton antiporter CemA (464 aa).

5 helical membrane passes run 36 to 56, 241 to 261, 341 to 361, 389 to 409, and 425 to 445; these read FSLS…TEIL, ASVS…QIAI, LLLR…LLIF, ILLL…EILV, and TPCF…YWIF.

It belongs to the CemA family.

Its subcellular location is the plastid. The protein localises to the chloroplast inner membrane. It catalyses the reaction K(+)(in) + H(+)(out) = K(+)(out) + H(+)(in). Functionally, contributes to K(+)/H(+) antiport activity by supporting proton efflux to control proton extrusion and homeostasis in chloroplasts in a light-dependent manner to modulate photosynthesis. Prevents excessive induction of non-photochemical quenching (NPQ) under continuous-light conditions. Indirectly promotes efficient inorganic carbon uptake into chloroplasts. The sequence is that of Potassium/proton antiporter CemA from Adiantum capillus-veneris (Maidenhair fern).